We begin with the raw amino-acid sequence, 249 residues long: Low affinity immunoglobulin gamma Fc region receptor III-A (249 aa).

The N-terminal stretch at 1–16 is a signal peptide; that stretch reads MWQLLPSTALLLVASA. At 17-198 the chain is on the extracellular side; that stretch reads RPQAADLPKA…IQGPPVPSTS (182 aa). Ig-like C2-type domains are found at residues 24-104 and 119-172; these read PKAV…LEVH and EGEP…YFCR. 2 disulfide bridges follow: cysteine 47–cysteine 88 and cysteine 127–cysteine 171. 4 N-linked (GlcNAc...) asparagine glycosylation sites follow: asparagine 55, asparagine 63, asparagine 166, and asparagine 179. A helical membrane pass occupies residues 199–219; it reads ALLPFWPHIPFAVVMALLFAV. At 220-249 the chain is on the cytoplasmic side; it reads DTGLYFAMQRHLHNSKRAWENSKVSWKQDP.

In terms of assembly, forms a heterooligomeric complex with ITAM-containing signaling subunits FCER1G. Interacts (via transmembrane domain) with signaling subunits; this interaction is a prerequisite for receptor complex expression on the cell surface and intracellular signal transduction. Binds the Fc region of antigen-complexed IgG.

The protein resides in the cell membrane. Receptor for the invariable Fc fragment of immunoglobulin gamma (IgG). Optimally activated upon binding of clustered antigen-IgG complexes displayed on cell surfaces, triggers lysis of antibody-coated cells, a process known as antibody-dependent cellular cytotoxicity (ADCC). Does not bind free monomeric IgG, thus avoiding inappropriate effector cell activation in the absence of antigenic trigger. Mediates IgG effector functions on natural killer (NK) cells. Binds antigen-IgG complexes generated upon infection and triggers NK cell-dependent cytokine production and degranulation to limit viral load and propagation. Fc-binding subunit that associates with FCER1G adapter to form functional signaling complexes. Following the engagement of antigen-IgG complexes, triggers phosphorylation of immunoreceptor tyrosine-based activation motif (ITAM)-containing adapter with subsequent activation of phosphatidylinositol 3-kinase signaling and sustained elevation of intracellular calcium that ultimately drive NK cell activation. Mediates enhanced ADCC in response to afucosylated IgGs. This is Low affinity immunoglobulin gamma Fc region receptor III-A from Mustela putorius furo (European domestic ferret).